Consider the following 286-residue polypeptide: Co-chaperone protein DjlA (286 aa).

At 1 to 6 (MQFIGK) the chain is on the periplasmic side. Residues 7 to 31 (IIGFFIGYKLFGGLFGGLLGIFIGH) form a helical membrane-spanning segment. At 32–286 (LADKKLYELG…DLICKTKGWK (255 aa)) the chain is on the cytoplasmic side. One can recognise a J domain in the interval 220–286 (DAYTVLGINE…DLICKTKGWK (67 aa)).

In terms of assembly, homodimer.

Its subcellular location is the cell inner membrane. Its function is as follows. Regulatory DnaK co-chaperone. Direct interaction between DnaK and DjlA is needed for the induction of the wcaABCDE operon, involved in the synthesis of a colanic acid polysaccharide capsule, possibly through activation of the RcsB/RcsC phosphotransfer signaling pathway. The colanic acid capsule may help the bacterium survive conditions outside the host. The sequence is that of Co-chaperone protein DjlA from Haemophilus ducreyi (strain 35000HP / ATCC 700724).